Consider the following 729-residue polypeptide: Catalase-peroxidase (729 aa).

The segment at 1–33 (MSAHNTNESAVGKCPFHEQKEEKSVLARGAGGG) is disordered. Basic and acidic residues predominate over residues 15–25 (PFHEQKEEKSV). A cross-link (tryptophyl-tyrosyl-methioninium (Trp-Tyr) (with M-255)) is located at residues 108–229 (WHSAGTYRTV…LGATEMGLIY (122 aa)). The active-site Proton acceptor is His109. Positions 229–255 (YVNPEGPEASGNPASAAPAIRATFGNM) form a cross-link, tryptophyl-tyrosyl-methioninium (Tyr-Met) (with W-108). His270 contributes to the heme b binding site.

Belongs to the peroxidase family. Peroxidase/catalase subfamily. As to quaternary structure, homodimer or homotetramer. Requires heme b as cofactor. Formation of the three residue Trp-Tyr-Met cross-link is important for the catalase, but not the peroxidase activity of the enzyme.

The catalysed reaction is H2O2 + AH2 = A + 2 H2O. It carries out the reaction 2 H2O2 = O2 + 2 H2O. Its function is as follows. Bifunctional enzyme with both catalase and broad-spectrum peroxidase activity. The chain is Catalase-peroxidase from Erwinia tasmaniensis (strain DSM 17950 / CFBP 7177 / CIP 109463 / NCPPB 4357 / Et1/99).